Reading from the N-terminus, the 227-residue chain is Ribonuclease 3 (227 aa).

The RNase III domain maps to 4 to 126; that stretch reads LDRLERKIGY…IIGAMSLDQG (123 aa). Position 39 (E39) interacts with Mg(2+). D43 is a catalytic residue. Mg(2+)-binding residues include D112 and E115. E115 is a catalytic residue. A DRBM domain is found at 153–226; the sequence is DAKTRLQEYL…AEQILKELDI (74 aa).

Belongs to the ribonuclease III family. Homodimer. Mg(2+) serves as cofactor.

It is found in the cytoplasm. It catalyses the reaction Endonucleolytic cleavage to 5'-phosphomonoester.. Digests double-stranded RNA. Involved in the processing of primary rRNA transcript to yield the immediate precursors to the large and small rRNAs (23S and 16S). Processes some mRNAs, and tRNAs when they are encoded in the rRNA operon. Processes pre-crRNA and tracrRNA of type II CRISPR loci if present in the organism. This is Ribonuclease 3 from Haemophilus influenzae (strain ATCC 51907 / DSM 11121 / KW20 / Rd).